Here is a 396-residue protein sequence, read N- to C-terminus: 1-deoxy-D-xylulose 5-phosphate reductoisomerase (396 aa).

NADPH-binding residues include threonine 13, glycine 14, serine 15, isoleucine 16, and asparagine 127. Lysine 128 is a 1-deoxy-D-xylulose 5-phosphate binding site. Glutamate 129 serves as a coordination point for NADPH. Position 153 (aspartate 153) interacts with Mn(2+). Residues serine 154, glutamate 155, serine 184, and histidine 207 each contribute to the 1-deoxy-D-xylulose 5-phosphate site. Mn(2+) is bound at residue glutamate 155. Glycine 213 is a binding site for NADPH. Residues serine 220, asparagine 225, lysine 226, and glutamate 229 each coordinate 1-deoxy-D-xylulose 5-phosphate. Glutamate 229 is a Mn(2+) binding site.

Belongs to the DXR family. It depends on Mg(2+) as a cofactor. Mn(2+) serves as cofactor.

The catalysed reaction is 2-C-methyl-D-erythritol 4-phosphate + NADP(+) = 1-deoxy-D-xylulose 5-phosphate + NADPH + H(+). Its pathway is isoprenoid biosynthesis; isopentenyl diphosphate biosynthesis via DXP pathway; isopentenyl diphosphate from 1-deoxy-D-xylulose 5-phosphate: step 1/6. Catalyzes the NADPH-dependent rearrangement and reduction of 1-deoxy-D-xylulose-5-phosphate (DXP) to 2-C-methyl-D-erythritol 4-phosphate (MEP). In Pseudomonas syringae pv. syringae (strain B728a), this protein is 1-deoxy-D-xylulose 5-phosphate reductoisomerase.